We begin with the raw amino-acid sequence, 335 residues long: Tetraacyldisaccharide 4'-kinase (335 aa).

58–65 (TVGGSGKT) is an ATP binding site.

It belongs to the LpxK family.

It carries out the reaction a lipid A disaccharide + ATP = a lipid IVA + ADP + H(+). It participates in glycolipid biosynthesis; lipid IV(A) biosynthesis; lipid IV(A) from (3R)-3-hydroxytetradecanoyl-[acyl-carrier-protein] and UDP-N-acetyl-alpha-D-glucosamine: step 6/6. Functionally, transfers the gamma-phosphate of ATP to the 4'-position of a tetraacyldisaccharide 1-phosphate intermediate (termed DS-1-P) to form tetraacyldisaccharide 1,4'-bis-phosphate (lipid IVA). The chain is Tetraacyldisaccharide 4'-kinase from Shewanella sp. (strain MR-4).